We begin with the raw amino-acid sequence, 806 residues long: Leucine--tRNA ligase (806 aa).

Positions 40–51 (PYPSGAGLHVGH) match the 'HIGH' region motif. Positions 578–582 (KMSKS) match the 'KMSKS' region motif. An ATP-binding site is contributed by lysine 581.

This sequence belongs to the class-I aminoacyl-tRNA synthetase family.

Its subcellular location is the cytoplasm. It carries out the reaction tRNA(Leu) + L-leucine + ATP = L-leucyl-tRNA(Leu) + AMP + diphosphate. The chain is Leucine--tRNA ligase from Staphylococcus aureus (strain MSSA476).